A 254-amino-acid chain; its full sequence is 3-deoxy-manno-octulosonate cytidylyltransferase (254 aa).

Belongs to the KdsB family.

It localises to the cytoplasm. It carries out the reaction 3-deoxy-alpha-D-manno-oct-2-ulosonate + CTP = CMP-3-deoxy-beta-D-manno-octulosonate + diphosphate. It participates in nucleotide-sugar biosynthesis; CMP-3-deoxy-D-manno-octulosonate biosynthesis; CMP-3-deoxy-D-manno-octulosonate from 3-deoxy-D-manno-octulosonate and CTP: step 1/1. Its pathway is bacterial outer membrane biogenesis; lipopolysaccharide biosynthesis. Its function is as follows. Activates KDO (a required 8-carbon sugar) for incorporation into bacterial lipopolysaccharide in Gram-negative bacteria. This is 3-deoxy-manno-octulosonate cytidylyltransferase from Polynucleobacter asymbioticus (strain DSM 18221 / CIP 109841 / QLW-P1DMWA-1) (Polynucleobacter necessarius subsp. asymbioticus).